A 113-amino-acid chain; its full sequence is uncharacterized protein (113 aa).

Residues 16–70 enclose the HTH cro/C1-type domain; it reads LYEYLEPLDLKINELAELLHVHRNSVSALINNNRKLTTEMAFRLAKVFDTTVDFW. Residues 27 to 46 constitute a DNA-binding region (H-T-H motif); that stretch reads INELAELLHVHRNSVSALIN.

This sequence belongs to the VapA/VapI family.

This is an uncharacterized protein from Escherichia coli O6:H1 (strain CFT073 / ATCC 700928 / UPEC).